We begin with the raw amino-acid sequence, 724 residues long: Coiled-coil domain-containing protein 175 (724 aa).

Coiled coils occupy residues 131–164 (VEMS…NTAL), 203–256 (INLE…RKET), 282–373 (VVLS…RQYK), 426–534 (ELHR…ERKL), and 565–627 (QLQV…QLRE).

This is Coiled-coil domain-containing protein 175 (CCDC175) from Bos taurus (Bovine).